The primary structure comprises 1489 residues: Type-2 histone deacetylase 1 (1489 aa).

4 stretches are compositionally biased toward low complexity: residues 135 to 163 (NNNN…SPSG), 190 to 259 (SNGN…SRNL), 281 to 306 (NIIN…TSTT), and 325 to 399 (SPTS…NINN). Disordered stretches follow at residues 135 to 259 (NNNN…SRNL), 281 to 556 (NIIN…NYQQ), 915 to 935 (NNNN…DDQL), 955 to 1024 (NISK…RDRD), and 1151 to 1185 (STGI…GEQC). A compositionally biased stretch (polar residues) spans 400-430 (VANGTPRPSLQTSRLQGKLPSPQQYNTSPSH). Composition is skewed to low complexity over residues 431–450 (QQYP…PIQS), 486–553 (NNNN…NNSN), 915–928 (NNNN…NNNN), and 959–988 (NNNN…NNNN). Basic and acidic residues-rich tracts occupy residues 989-1001 (RNRD…ERDN) and 1010-1024 (IEKE…RDRD). The segment covering 1158-1180 (STSTPITTTGTATVTPGSTTSST) has biased composition (low complexity). The active-site Proton acceptor is the H1232. Acidic residues predominate over residues 1325–1335 (EQNDYDDDDNN). Residues 1325–1374 (EQNDYDDDDNNNDVNNNNNNNNNNNNNNNNNNNNKNNNNNNSNSITQQST) form a disordered region. Residues 1336-1367 (NDVNNNNNNNNNNNNNNNNNNNNKNNNNNNSN) are compositionally biased toward low complexity.

Belongs to the histone deacetylase family. HD type 2 subfamily.

It is found in the nucleus. It localises to the cytoplasm. It carries out the reaction N(6)-acetyl-L-lysyl-[histone] + H2O = L-lysyl-[histone] + acetate. In terms of biological role, responsible for the deacetylation of lysine residues on the N-terminal part of the core histones (H2A, H2B, H3 and H4). Histone deacetylation plays an important role in transcriptional regulation, cell cycle progression and developmental events. Histone deacetylases act via the formation of large multiprotein complexes. The protein is Type-2 histone deacetylase 1 (hdaD) of Dictyostelium discoideum (Social amoeba).